A 117-amino-acid polypeptide reads, in one-letter code: Large ribosomal subunit protein uL24 (117 aa).

Belongs to the universal ribosomal protein uL24 family. As to quaternary structure, part of the 50S ribosomal subunit.

One of two assembly initiator proteins, it binds directly to the 5'-end of the 23S rRNA, where it nucleates assembly of the 50S subunit. In terms of biological role, one of the proteins that surrounds the polypeptide exit tunnel on the outside of the subunit. This Thermosynechococcus vestitus (strain NIES-2133 / IAM M-273 / BP-1) protein is Large ribosomal subunit protein uL24.